We begin with the raw amino-acid sequence, 208 residues long: V-type ATP synthase subunit D (208 aa).

The protein belongs to the V-ATPase D subunit family.

Functionally, produces ATP from ADP in the presence of a proton gradient across the membrane. This Chlamydia caviae (strain ATCC VR-813 / DSM 19441 / 03DC25 / GPIC) (Chlamydophila caviae) protein is V-type ATP synthase subunit D.